The chain runs to 546 residues: Probable protein kinase UbiB (546 aa).

Positions 124-502 (DFEIKPLASA…HVRQGQSRYF (379 aa)) constitute a Protein kinase domain. Residues 130–138 (LASASIAQV) and Lys153 contribute to the ATP site. Catalysis depends on Asp288, which acts as the Proton acceptor. A run of 2 helical transmembrane segments spans residues 501–521 (YFLG…VSRP) and 522–542 (EWGL…FVGW).

This sequence belongs to the ABC1 family. UbiB subfamily.

Its subcellular location is the cell inner membrane. The protein operates within cofactor biosynthesis; ubiquinone biosynthesis [regulation]. Functionally, is probably a protein kinase regulator of UbiI activity which is involved in aerobic coenzyme Q (ubiquinone) biosynthesis. This is Probable protein kinase UbiB from Escherichia coli (strain SMS-3-5 / SECEC).